The following is a 359-amino-acid chain: Methylthioribose-1-phosphate isomerase (359 aa).

Residues 52-54 (RGA), Arg90, and Gln200 each bind substrate. Asp241 serves as the catalytic Proton donor. 251–252 (NK) serves as a coordination point for substrate.

The protein belongs to the eIF-2B alpha/beta/delta subunits family. MtnA subfamily.

The catalysed reaction is 5-(methylsulfanyl)-alpha-D-ribose 1-phosphate = 5-(methylsulfanyl)-D-ribulose 1-phosphate. It functions in the pathway amino-acid biosynthesis; L-methionine biosynthesis via salvage pathway; L-methionine from S-methyl-5-thio-alpha-D-ribose 1-phosphate: step 1/6. Functionally, catalyzes the interconversion of methylthioribose-1-phosphate (MTR-1-P) into methylthioribulose-1-phosphate (MTRu-1-P). The chain is Methylthioribose-1-phosphate isomerase from Sulfurimonas denitrificans (strain ATCC 33889 / DSM 1251) (Thiomicrospira denitrificans (strain ATCC 33889 / DSM 1251)).